The following is a 95-amino-acid chain: Progonadoliberin-1 (95 aa).

The N-terminal stretch at methionine 1–cysteine 25 is a signal peptide. Pyrrolidone carboxylic acid is present on glutamine 26. Glycine 35 is modified (glycine amide).

It belongs to the GnRH family.

It is found in the secreted. In terms of biological role, stimulates the secretion of gonadotropins. This Sparus aurata (Gilthead sea bream) protein is Progonadoliberin-1 (gnrh1).